Reading from the N-terminus, the 234-residue chain is Phosphoribosylformylglycinamidine synthase subunit PurQ (234 aa).

A Glutamine amidotransferase type-1 domain is found at 5-234 (TVGIVVFPGS…ESLFAHLAGA (230 aa)). Cysteine 89 serves as the catalytic Nucleophile. Residues histidine 206 and glutamate 208 contribute to the active site.

Part of the FGAM synthase complex composed of 1 PurL, 1 PurQ and 2 PurS subunits.

Its subcellular location is the cytoplasm. It catalyses the reaction N(2)-formyl-N(1)-(5-phospho-beta-D-ribosyl)glycinamide + L-glutamine + ATP + H2O = 2-formamido-N(1)-(5-O-phospho-beta-D-ribosyl)acetamidine + L-glutamate + ADP + phosphate + H(+). The catalysed reaction is L-glutamine + H2O = L-glutamate + NH4(+). It participates in purine metabolism; IMP biosynthesis via de novo pathway; 5-amino-1-(5-phospho-D-ribosyl)imidazole from N(2)-formyl-N(1)-(5-phospho-D-ribosyl)glycinamide: step 1/2. In terms of biological role, part of the phosphoribosylformylglycinamidine synthase complex involved in the purines biosynthetic pathway. Catalyzes the ATP-dependent conversion of formylglycinamide ribonucleotide (FGAR) and glutamine to yield formylglycinamidine ribonucleotide (FGAM) and glutamate. The FGAM synthase complex is composed of three subunits. PurQ produces an ammonia molecule by converting glutamine to glutamate. PurL transfers the ammonia molecule to FGAR to form FGAM in an ATP-dependent manner. PurS interacts with PurQ and PurL and is thought to assist in the transfer of the ammonia molecule from PurQ to PurL. The chain is Phosphoribosylformylglycinamidine synthase subunit PurQ from Chlorobaculum tepidum (strain ATCC 49652 / DSM 12025 / NBRC 103806 / TLS) (Chlorobium tepidum).